Consider the following 258-residue polypeptide: Ciliogenesis and planar polarity effector 2 (258 aa).

A small GTPase-like region spans residues 50 to 258 (SIDTASYKIF…LPNPPESAPE (209 aa)). Positions 64, 65, 67, 68, 69, 70, 82, 84, 87, 176, 178, and 206 each coordinate GTP.

This sequence belongs to the small GTPase superfamily. Rab family. In terms of assembly, interacts with FUZ. Associates with the CPLANE (ciliogenesis and planar polarity effectors) complex via its interaction with FUZ.

It is found in the cytoplasm. The protein resides in the cytoskeleton. It localises to the cilium basal body. The protein localises to the microtubule organizing center. Its subcellular location is the centrosome. It is found in the centriole. Functionally, required for efficient primary cilia initiation, regulating a late step in cilia initiation. Plays a role in the final maturation of the mother centriole and ciliary vesicle that allows extension of the ciliary axoneme. The polypeptide is Ciliogenesis and planar polarity effector 2 (Homo sapiens (Human)).